We begin with the raw amino-acid sequence, 120 residues long: PYEKIGAELVKEVAKKTDDVAGDGTTTATVLAQALVKEGLRNVAAGANPLGLKRGIEKAVEKITEGLLATAKEVETKEQIAATAGISAGDQTIGDLIAEAMDKVGNEGVITVEESNTFGL.

23 to 27 (DGTTT) serves as a coordination point for ATP.

Belongs to the chaperonin (HSP60) family. Forms a cylinder of 14 subunits composed of two heptameric rings stacked back-to-back. Interacts with the co-chaperonin GroES.

The protein localises to the cytoplasm. The enzyme catalyses ATP + H2O + a folded polypeptide = ADP + phosphate + an unfolded polypeptide.. Functionally, together with its co-chaperonin GroES, plays an essential role in assisting protein folding. The GroEL-GroES system forms a nano-cage that allows encapsulation of the non-native substrate proteins and provides a physical environment optimized to promote and accelerate protein folding. The polypeptide is Chaperonin GroEL (Mycolicibacter nonchromogenicus (Mycobacterium nonchromogenicum)).